We begin with the raw amino-acid sequence, 196 residues long: Elongation factor Ts (196 aa).

The interval 80–83 (TDFV) is involved in Mg(2+) ion dislocation from EF-Tu.

The protein belongs to the EF-Ts family.

The protein resides in the cytoplasm. Associates with the EF-Tu.GDP complex and induces the exchange of GDP to GTP. It remains bound to the aminoacyl-tRNA.EF-Tu.GTP complex up to the GTP hydrolysis stage on the ribosome. In Thermosipho melanesiensis (strain DSM 12029 / CIP 104789 / BI429), this protein is Elongation factor Ts.